A 286-amino-acid polypeptide reads, in one-letter code: Putative type II secretion system L-type protein YghE (286 aa).

A helical membrane pass occupies residues 136–156 (VMILPILLILVALAVERGVTL).

The protein belongs to the GSP L family.

Its subcellular location is the cell inner membrane. In terms of biological role, involved in a type II secretion system (T2SS, formerly general secretion pathway, GSP) for the export of folded proteins across the outer membrane. This Escherichia coli (strain K12) protein is Putative type II secretion system L-type protein YghE.